The following is a 119-amino-acid chain: MGVRVAQPAAKQFVVLQQVEVLYGVVSQVALLHDAELLVVFDQLWQQFALAAHLFKHVAQVAAGHLALLELFCQLTNVVLVAAPRARLDQLRQLVLQAPVLLAAKRCEREHWLDQRRHL.

This is an uncharacterized protein from Orgyia pseudotsugata (Douglas-fir tussock moth).